The chain runs to 705 residues: DNA polymerase alpha subunit B (705 aa).

A disordered region spans residues 115–199; that stretch reads KKRKLHGPFS…TPTTSRQNVP (85 aa). The span at 125 to 134 shows a compositional bias: polar residues; the sequence is LSDSKQTYNV. Serine 126 carries the phosphoserine modification. Residues 181-197 show a composition bias toward low complexity; it reads STFQTPTTNTPTTSRQN.

It belongs to the DNA polymerase alpha subunit B family. As to quaternary structure, DNA polymerase alpha:primase is a four subunit enzyme complex, which is assembled throughout the cell cycle, and consists of the two DNA polymerase subunits A POL1 and B POL12, and the DNA primase large PRI2 and small PRI1 subunits. Subunit B POL12 binds to subunit A POL1. In terms of processing, phosphorylated in a cell cycle-dependent manner.

Its subcellular location is the nucleus. Functionally, non-catalytic component of DNA polymerase alpha, which in a complex with DNA primase (DNA polymerase alpha:primase) constitutes a replicative polymerase. POL12 may play an essential role at the early stage of chromosomal DNA replication by coupling DNA polymerase alpha to the cellular replication machinery. Interacts with MCM10. In Saccharomyces cerevisiae (strain ATCC 204508 / S288c) (Baker's yeast), this protein is DNA polymerase alpha subunit B (POL12).